The following is a 394-amino-acid chain: MAKLDFDRSKEHVNVGTIGHVDHGKTTLTAAIATVLSKKGLSEARDYASIDNAPEEKARGITINTSHIEYQTEKRHYAHVDCPGHADYVKNMITGAAQMDGAILVVAATDGPMPQTREHILLSKQVGVPRMVVFLNKCDMVDDEEMIGLVEMEIRDLLSEYGFDGDNAPIVRGSALKALEGDAVYEDKILELMNAVDTYIENPVKELDKPFLMAVEDVFTITGRGTVATGRVERGRLTLNEEVEIVGLKPTKKTVVTGIEMFRKNLKEALAGDNAGLLLRGVNRDDVERGQVLAKPGSIVPHTEFEAAIYVLKKEEGGRHTPFFKNYKPQFYFRTTDVTGGVEFEAGREMVMPGENVNLKVKLISPIAVEEGTKFSIREGGRTVGAGSVTKIVK.

The 195-residue stretch at 10–204 (KEHVNVGTIG…AVDTYIENPV (195 aa)) folds into the tr-type G domain. The G1 stretch occupies residues 19–26 (GHVDHGKT). 19 to 26 (GHVDHGKT) is a GTP binding site. T26 provides a ligand contact to Mg(2+). The interval 60–64 (GITIN) is G2. A G3 region spans residues 81-84 (DCPG). Residues 81 to 85 (DCPGH) and 136 to 139 (NKCD) contribute to the GTP site. The segment at 136–139 (NKCD) is G4. Residues 174 to 176 (SAL) are G5.

This sequence belongs to the TRAFAC class translation factor GTPase superfamily. Classic translation factor GTPase family. EF-Tu/EF-1A subfamily. In terms of assembly, monomer.

It localises to the cytoplasm. It catalyses the reaction GTP + H2O = GDP + phosphate + H(+). In terms of biological role, GTP hydrolase that promotes the GTP-dependent binding of aminoacyl-tRNA to the A-site of ribosomes during protein biosynthesis. This chain is Elongation factor Tu, found in Mycoplasmopsis synoviae (strain 53) (Mycoplasma synoviae).